A 314-amino-acid polypeptide reads, in one-letter code: Aspartate carbamoyltransferase catalytic subunit (314 aa).

Positions 55 and 56 each coordinate carbamoyl phosphate. Lys-83 is a binding site for L-aspartate. 3 residues coordinate carbamoyl phosphate: Arg-105, His-139, and Gln-142. L-aspartate-binding residues include Arg-172 and Arg-226. 2 residues coordinate carbamoyl phosphate: Gly-267 and Pro-268.

This sequence belongs to the aspartate/ornithine carbamoyltransferase superfamily. ATCase family. Heterododecamer (2C3:3R2) of six catalytic PyrB chains organized as two trimers (C3), and six regulatory PyrI chains organized as three dimers (R2).

The enzyme catalyses carbamoyl phosphate + L-aspartate = N-carbamoyl-L-aspartate + phosphate + H(+). It participates in pyrimidine metabolism; UMP biosynthesis via de novo pathway; (S)-dihydroorotate from bicarbonate: step 2/3. Catalyzes the condensation of carbamoyl phosphate and aspartate to form carbamoyl aspartate and inorganic phosphate, the committed step in the de novo pyrimidine nucleotide biosynthesis pathway. The polypeptide is Aspartate carbamoyltransferase catalytic subunit (Rhodococcus jostii (strain RHA1)).